The chain runs to 304 residues: Olfactory receptor 8G2 (304 aa).

Topologically, residues Met1 to Phe41 are extracellular. The N-linked (GlcNAc...) asparagine glycan is linked to Asn18. The chain crosses the membrane as a helical span at residues Leu42 to Ile62. Residues Gly63 to His69 are Cytoplasmic-facing. Residues Thr70–Ile90 form a helical membrane-spanning segment. Over Thr91–Cys110 the chain is Extracellular. A disulfide bond links Cys110 and Cys192. Residues Met111 to Val130 form a helical membrane-spanning segment. Over Thr131–Cys154 the chain is Cytoplasmic. The chain crosses the membrane as a helical span at residues Phe155–Phe175. Residues Met176–Asp193 are Extracellular-facing. The chain crosses the membrane as a helical span at residues Leu194–Val214. The Cytoplasmic portion of the chain corresponds to Leu215–Ala217. Residues Phe218–Ile238 traverse the membrane as a helical segment. The Extracellular segment spans residues Leu239–His257. Residues Ile258–Val278 form a helical membrane-spanning segment. Topologically, residues Ser279–Ala304 are cytoplasmic.

Belongs to the G-protein coupled receptor 1 family.

Its subcellular location is the cell membrane. Odorant receptor. This is Olfactory receptor 8G2 from Homo sapiens (Human).